A 65-amino-acid chain; its full sequence is Small ribosomal subunit protein bS21A (65 aa).

The protein belongs to the bacterial ribosomal protein bS21 family.

This is Small ribosomal subunit protein bS21A from Francisella tularensis subsp. holarctica (strain LVS).